The sequence spans 447 residues: Tubulin beta chain (447 aa).

8 residues coordinate GTP: Gln11, Glu69, Ser138, Gly142, Thr143, Gly144, Asn204, and Asn226. Mg(2+) is bound at residue Glu69. A disordered region spans residues 424-447; it reads QYQEASVSEGEEEYDEEAPLEGEE. Over residues 432–447 the composition is skewed to acidic residues; the sequence is EGEEEYDEEAPLEGEE.

The protein belongs to the tubulin family. In terms of assembly, dimer of alpha and beta chains. A typical microtubule is a hollow water-filled tube with an outer diameter of 25 nm and an inner diameter of 15 nM. Alpha-beta heterodimers associate head-to-tail to form protofilaments running lengthwise along the microtubule wall with the beta-tubulin subunit facing the microtubule plus end conferring a structural polarity. Microtubules usually have 13 protofilaments but different protofilament numbers can be found in some organisms and specialized cells. Mg(2+) serves as cofactor.

Its subcellular location is the cytoplasm. The protein resides in the cytoskeleton. Its function is as follows. Tubulin is the major constituent of microtubules, a cylinder consisting of laterally associated linear protofilaments composed of alpha- and beta-tubulin heterodimers. Microtubules grow by the addition of GTP-tubulin dimers to the microtubule end, where a stabilizing cap forms. Below the cap, tubulin dimers are in GDP-bound state, owing to GTPase activity of alpha-tubulin. This is Tubulin beta chain from Venturia inaequalis (Apple scab fungus).